Consider the following 350-residue polypeptide: UDP-glucose 4-epimerase 2 (350 aa).

Residues 12 to 14 (GYI), 33 to 37 (DNYDN), 63 to 64 (DL), Phe-85, and Lys-89 contribute to the NAD(+) site. 129 to 131 (SAT) is a binding site for substrate. Tyr-153 serves as the catalytic Proton acceptor. Residues Lys-157 and Tyr-181 each coordinate NAD(+). Substrate is bound by residues 181-183 (YFN), 202-204 (NNL), 220-222 (TVF), Arg-235, and 297-300 (RPGD).

The protein belongs to the NAD(P)-dependent epimerase/dehydratase family. As to quaternary structure, forms homodimers and heterodimers. It depends on NAD(+) as a cofactor. In terms of tissue distribution, widely expressed. Most highly expressed in stems and flowers.

The protein resides in the cytoplasm. The enzyme catalyses UDP-alpha-D-glucose = UDP-alpha-D-galactose. It participates in carbohydrate metabolism; galactose metabolism. With respect to regulation, enhanced activity by NaCl. Enhanced activity by NAD(+). Strongly inhibited by UDP. Functionally, catalyzes the interconversion between UDP-glucose and UDP-galactose. Cooperates with UGE3 in pollen development and with UGE4 in cell wall carbohydrate biosynthesis and growth. The sequence is that of UDP-glucose 4-epimerase 2 from Arabidopsis thaliana (Mouse-ear cress).